The following is a 481-amino-acid chain: Cerebral cavernous malformations 2 protein-like (481 aa).

Disordered stretches follow at residues 161–193 and 214–290; these read PVPAGMDGSPGGSGRDPGPPGAAPEKRRVGTAE and EARA…DPQN. A compositionally biased stretch (basic and acidic residues) spans 184 to 193; it reads PEKRRVGTAE. The segment covering 214-223 has biased composition (gly residues); that stretch reads EARAAGGGGS. The segment covering 237–251 has biased composition (basic and acidic residues); the sequence is WERRQTFSGSWERRH.

It belongs to the CCM2 family.

The chain is Cerebral cavernous malformations 2 protein-like (Ccm2l) from Mus musculus (Mouse).